We begin with the raw amino-acid sequence, 166 residues long: Ribosome maturation factor RimM (166 aa).

One can recognise a PRC barrel domain in the interval 90–163; sequence EGQYFIKDII…KIVIKAVEEW (74 aa).

Belongs to the RimM family. In terms of assembly, binds ribosomal protein uS19.

It is found in the cytoplasm. An accessory protein needed during the final step in the assembly of 30S ribosomal subunit, possibly for assembly of the head region. Essential for efficient processing of 16S rRNA. May be needed both before and after RbfA during the maturation of 16S rRNA. It has affinity for free ribosomal 30S subunits but not for 70S ribosomes. The chain is Ribosome maturation factor RimM from Clostridium acetobutylicum (strain ATCC 824 / DSM 792 / JCM 1419 / IAM 19013 / LMG 5710 / NBRC 13948 / NRRL B-527 / VKM B-1787 / 2291 / W).